A 482-amino-acid polypeptide reads, in one-letter code: Protein farnesyltransferase subunit beta (482 aa).

4 PFTB repeats span residues 131–172 (ESNA…VTLG), 182–223 (REKM…SILN), 230–271 (TQGL…ILIN), and 278–319 (LDSL…VLLQ). Residues 256-259 (HGGY) and 298-301 (RTNK) contribute to the (2E,6E)-farnesyl diphosphate site. Zn(2+) contacts are provided by Asp-304 and Cys-306. Residue 307–310 (YTFW) coordinates (2E,6E)-farnesyl diphosphate. Positions 329 to 372 (VHGSSHISEGTNEEHHAHDEDDLEDSDDDDDSDEDNDEDSVNGH) are disordered. Residues 348 to 368 (EDDLEDSDDDDDSDEDNDEDS) show a composition bias toward acidic residues. One copy of the PFTB 5 repeat lies at 391–433 (SLGLQRYVLLCSKIPDGGFRDKPRKPRDFYHTCYCLSGLSVAQ). Residue His-421 participates in Zn(2+) binding.

Belongs to the protein prenyltransferase subunit beta family. As to quaternary structure, heterodimer of FTA and FTB (farnesyltransferase). Heterodimer of an alpha and a beta subunit. Zn(2+) serves as cofactor.

The catalysed reaction is L-cysteinyl-[protein] + (2E,6E)-farnesyl diphosphate = S-(2E,6E)-farnesyl-L-cysteinyl-[protein] + diphosphate. Catalyzes the transfer of a farnesyl moiety from farnesyl diphosphate to a cysteine at the fourth position from the C-terminus of several proteins having the C-terminal sequence Cys-aliphatic-aliphatic-X (CaaX). The beta subunit is responsible for peptide-binding. Acts as an abscisic acid (ABA) negative regulator by mediating ASG2 farnesylation and consequently monitoring its subcellular localization. Involved in responses to salt (NaCl) and osmotic (e.g. in response to mannitol and PEG) stresses. The chain is Protein farnesyltransferase subunit beta (FTB) from Arabidopsis thaliana (Mouse-ear cress).